Reading from the N-terminus, the 323-residue chain is Glucokinase (323 aa).

Residue 8–13 coordinates ATP; it reads GDVGGT.

This sequence belongs to the bacterial glucokinase family.

It localises to the cytoplasm. The enzyme catalyses D-glucose + ATP = D-glucose 6-phosphate + ADP + H(+). The sequence is that of Glucokinase from Yersinia pseudotuberculosis serotype I (strain IP32953).